A 357-amino-acid polypeptide reads, in one-letter code: N-acetyl-gamma-glutamyl-phosphate reductase (357 aa).

Cys151 is a catalytic residue.

It belongs to the NAGSA dehydrogenase family. Type 1 subfamily.

Its subcellular location is the cytoplasm. The catalysed reaction is N-acetyl-L-glutamate 5-semialdehyde + phosphate + NADP(+) = N-acetyl-L-glutamyl 5-phosphate + NADPH + H(+). The protein operates within amino-acid biosynthesis; L-arginine biosynthesis; N(2)-acetyl-L-ornithine from L-glutamate: step 3/4. Its function is as follows. Catalyzes the NADPH-dependent reduction of N-acetyl-5-glutamyl phosphate to yield N-acetyl-L-glutamate 5-semialdehyde. The protein is N-acetyl-gamma-glutamyl-phosphate reductase of Corynebacterium kroppenstedtii (strain DSM 44385 / JCM 11950 / CIP 105744 / CCUG 35717).